The primary structure comprises 161 residues: Stress response protein YvgO (161 aa).

Positions methionine 1–alanine 26 are cleaved as a signal peptide.

This chain is Stress response protein YvgO (yvgO), found in Bacillus subtilis (strain 168).